The chain runs to 208 residues: Ras-related protein Rab6 (208 aa).

19 to 27 is a GTP binding site; sequence GEQSVGKTS. Residues 41–49 carry the Effector region motif; sequence YQATIGIDF. Residues 67-71, 125-128, and 155-157 contribute to the GTP site; these read DTAGQ, NKTD, and SAK. Residues 176–208 form a disordered region; that stretch reads MDSTENKPSEDMQEVVLKDSPNETKDPEGGCAC. The segment covering 179–208 has biased composition (basic and acidic residues); the sequence is TENKPSEDMQEVVLKDSPNETKDPEGGCAC.

The protein belongs to the small GTPase superfamily. Rab family. As to quaternary structure, interacts with Rich and Act5C. Interacts with BicD (via C-terminal domain). Interacts (in GTP-bound) with GCC1/CG10703 and cbs. Interacts with Gorab (via C-terminus); binds to a Gorab homodimer, this interaction seems to be required for trans-Golgi localization of Gorab. Expressed in larval eye, wing and leg imaginal disks and in salivary gland. Expressed in the larval optic lobe, showing an enrichment in the neuropil. In the adult brain, expressed in photoreceptors and mushroom body.

The protein resides in the golgi apparatus membrane. It localises to the synapse. It is found in the perikaryon. Functionally, protein transport. Regulator of membrane traffic from the Golgi apparatus towards the endoplasmic reticulum (ER). Mediates membrane trafficking during egg chamber growth and organization, possibly upstream of exocyst component Sec5. Also during oogenesis, plays a role, together with BicD but independently of Sec5, in the polarization of the oocyte microtubule cytoskeleton, in the localization of oskar mRNA and in the anterodorsal secretion of grk. Required for anterograde opsin transport through the ER-Golgi complex. Plays a role, together with Rich, in regulating CadN transport in photoreceptor cells which is required for the formation of normal synaptic connections between axons from the inner photoreceptor cells in the eye and postsynaptic cells in the brain medulla layer M6. Necessary for proper development of bristle shafts of macrochaete and microchaete on the head, thorax and scutellum. Modulates Notch signaling. As a key regulator of vesicular traffic, plays a critical role in the regulation of actin organization and is required for normal rates of phagocytic uptake during phagocytosis involved in defense against viral and fungal infection. This Drosophila melanogaster (Fruit fly) protein is Ras-related protein Rab6.